The following is a 953-amino-acid chain: Translation initiation factor IF-2 (953 aa).

2 disordered regions span residues 48 to 212 (SSFS…KIDF) and 279 to 367 (TKLK…FHEL). Composition is skewed to basic and acidic residues over residues 80 to 89 (TGSEHVEKTQ), 98 to 111 (FKAE…EQAA), and 140 to 188 (QGDK…ENHK). 2 stretches are compositionally biased toward polar residues: residues 191–207 (RFTN…QSKS) and 282–291 (KSSNISAKST). A compositionally biased stretch (basic and acidic residues) spans 300–317 (ARPEKNRELTHHSQEGQK). The segment covering 322-338 (SWNSQNQVRNQKNSNWN) has biased composition (low complexity). Residues 339-348 (KNKKTKKGKN) show a composition bias toward basic residues. Residues 454–623 (ERAPVVTIMG…LLVAEVEELK (170 aa)) enclose the tr-type G domain. The segment at 463 to 470 (GHVDHGKT) is G1. GTP is bound at residue 463–470 (GHVDHGKT). Residues 488–492 (GITQH) are G2. The G3 stretch occupies residues 509 to 512 (DTPG). Residues 509–513 (DTPGH) and 563–566 (NKID) each bind GTP. The interval 563–566 (NKID) is G4. Residues 599 to 601 (SAK) form a G5 region.

Belongs to the TRAFAC class translation factor GTPase superfamily. Classic translation factor GTPase family. IF-2 subfamily.

The protein localises to the cytoplasm. Its function is as follows. One of the essential components for the initiation of protein synthesis. Protects formylmethionyl-tRNA from spontaneous hydrolysis and promotes its binding to the 30S ribosomal subunits. Also involved in the hydrolysis of GTP during the formation of the 70S ribosomal complex. The chain is Translation initiation factor IF-2 from Streptococcus pyogenes serotype M3 (strain ATCC BAA-595 / MGAS315).